Consider the following 159-residue polypeptide: Sumo-conjugating enzyme ubc9 (159 aa).

The region spanning 4–157 (ISSARLSEER…VKAQSKVYPP (154 aa)) is the UBC core domain. C93 functions as the Glycyl thioester intermediate in the catalytic mechanism.

The protein belongs to the ubiquitin-conjugating enzyme family.

It localises to the nucleus. The protein operates within protein modification; protein sumoylation. Functionally, accepts the ubiquitin-like protein sumo from the E1 complex and catalyzes its covalent attachment to other proteins with the help of an E3 ligase. The chain is Sumo-conjugating enzyme ubc9 (ubc9) from Dictyostelium discoideum (Social amoeba).